Reading from the N-terminus, the 615-residue chain is Alpha-terpinene synthase TPS33PK, chloroplastic (615 aa).

The N-terminal 33 residues, 1 to 33 (MFCRLGVHQFSPLSLILNTTKLARASTLSSACY), are a transit peptide targeting the chloroplast. (2E)-geranyl diphosphate contacts are provided by Glu-334, Val-371, Leu-375, Leu-513, and Ser-516. Mg(2+)-binding residues include Val-371 and Leu-375. A DDXXD motif motif is present at residues 371–375 (VYGTL). Ser-516, Met-520, and Asp-524 together coordinate Mg(2+).

Belongs to the terpene synthase family. Tpsb subfamily. The cofactor is Mg(2+). Requires Mn(2+) as cofactor.

The protein resides in the plastid. It localises to the chloroplast. The enzyme catalyses (2E)-geranyl diphosphate = alpha-terpinene + diphosphate. It catalyses the reaction (2E)-geranyl diphosphate = gamma-terpinene + diphosphate. The protein operates within secondary metabolite biosynthesis; terpenoid biosynthesis. In terms of biological role, involved in monoterpene (C10) olefins biosynthesis, constituants of cannabinoids and terpenoids-rich resins. Catalyzes mainly the conversion of (2E)-geranyl diphosphate to alpha-terpinene and gamma-terpinene. The chain is Alpha-terpinene synthase TPS33PK, chloroplastic from Cannabis sativa (Hemp).